The sequence spans 457 residues: D-hydantoinase (457 aa).

Zn(2+) is bound by residues His57 and His59. Ser69 is subject to Phosphoserine. Zn(2+) is bound at residue Lys148. Lys148 bears the N6-carboxylysine mark. Tyr153 serves as a coordination point for substrate. Zn(2+)-binding residues include His181 and His237. Thr286 contacts substrate. Asp313 contributes to the Zn(2+) binding site. A substrate-binding site is contributed by Asn335.

Belongs to the metallo-dependent hydrolases superfamily. Hydantoinase/dihydropyrimidinase family. In terms of assembly, homotetramer. It depends on Zn(2+) as a cofactor. Carboxylation allows a single lysine to coordinate two zinc ions.

In terms of biological role, catalyzes the stereospecific hydrolysis of the cyclic amide bond of D-hydantoin derivatives. This Rhizobium radiobacter (Agrobacterium tumefaciens) protein is D-hydantoinase (hyuA).